The following is a 162-amino-acid chain: Probable chemoreceptor glutamine deamidase CheD (162 aa).

This sequence belongs to the CheD family.

The catalysed reaction is L-glutaminyl-[protein] + H2O = L-glutamyl-[protein] + NH4(+). Functionally, probably deamidates glutamine residues to glutamate on methyl-accepting chemotaxis receptors (MCPs), playing an important role in chemotaxis. This chain is Probable chemoreceptor glutamine deamidase CheD, found in Clostridium botulinum (strain Eklund 17B / Type B).